Reading from the N-terminus, the 121-residue chain is Putative SNURF-like protein (121 aa).

This sequence belongs to the SNURF family.

The protein is Putative SNURF-like protein (SNURFL) of Homo sapiens (Human).